Reading from the N-terminus, the 2098-residue chain is Unconventional myosin heavy chain 6 (2098 aa).

A Myosin motor domain is found at 62 to 732 (QGVEDMCQLG…HDLVLEQEYY (671 aa)). 155–162 (GESGAGKT) contacts ATP. Actin-binding stretches follow at residues 609-631 (LEQL…KPNE) and 711-725 (QLGK…KHDL). IQ domains lie at 735–757 (LKDK…DFEK), 758–787 (QRQA…GFSR), and 804–833 (LRKT…RGEK). The interval 860–898 (FLPSDGKDSGNENDSADSSRRGSYSRLHTSPVMPPANIP) is disordered. The MyTH4 1 domain maps to 929–1168 (HVKKPLKTAL…PSYVELQANK (240 aa)). Residues 1171–1211 (KPVVLAVTFMDGSVKTLCADSATTAAELCKQLAEKVGLTNS) form the Ras-associating domain. Positions 1173 to 1481 (VVLAVTFMDG…MFLEGLKKRS (309 aa)) constitute an FERM 1 domain. In terms of domain architecture, SH3 spans 1479 to 1547 (KRSRYLVAIK…RAENVYVLPT (69 aa)). The 149-residue stretch at 1624–1772 (FSREHIDQPL…PHLVEVEAIQ (149 aa)) folds into the MyTH4 2 domain. Positions 1778–2086 (IFHKVFFPDN…SYISLLISNQ (309 aa)) constitute an FERM 2 domain.

This sequence belongs to the TRAFAC class myosin-kinesin ATPase superfamily. Myosin family. In terms of assembly, interacts with unc-98.

The protein resides in the cytoplasm. Myosins are actin-based motor molecules with ATPase activity. Unconventional myosins serve in intracellular movements. Their highly divergent tails are presumed to bind to membranous compartments, which would be moved relative to actin filaments. This Caenorhabditis elegans protein is Unconventional myosin heavy chain 6.